The sequence spans 448 residues: Probable protein phosphatase 2C 74 (448 aa).

Positions methionine 1 to glutamate 48 are disordered. The N-myristoyl glycine moiety is linked to residue glycine 2. A compositionally biased stretch (basic residues) spans glycine 27–proline 37. Residues threonine 67–leucine 384 form the PPM-type phosphatase domain. 4 residues coordinate Mn(2+): aspartate 103, glycine 104, aspartate 329, and aspartate 375. Residues histidine 401–valine 431 form a disordered region. Low complexity predominate over residues aspartate 412–proline 426.

Belongs to the PP2C family. As to quaternary structure, interacts with KIN10. Requires Mg(2+) as cofactor. Mn(2+) is required as a cofactor. In terms of tissue distribution, expressed in the whole plant.

It localises to the cell membrane. The enzyme catalyses O-phospho-L-seryl-[protein] + H2O = L-seryl-[protein] + phosphate. The catalysed reaction is O-phospho-L-threonyl-[protein] + H2O = L-threonyl-[protein] + phosphate. Functionally, acts as a protein phosphatase. The protein is Probable protein phosphatase 2C 74 of Arabidopsis thaliana (Mouse-ear cress).